A 395-amino-acid polypeptide reads, in one-letter code: Putative pyridoxal phosphate-dependent acyltransferase (395 aa).

110–111 (GF) is a pyridoxal 5'-phosphate binding site. H135 provides a ligand contact to substrate. Pyridoxal 5'-phosphate contacts are provided by residues S185, 210–213 (DDAH), and 240–243 (TLSK). N6-(pyridoxal phosphate)lysine is present on K243. Position 357 (T357) interacts with substrate.

The protein belongs to the class-II pyridoxal-phosphate-dependent aminotransferase family. In terms of assembly, homodimer. The cofactor is pyridoxal 5'-phosphate.

This is Putative pyridoxal phosphate-dependent acyltransferase from Staphylococcus aureus (strain MRSA252).